Consider the following 75-residue polypeptide: Large ribosomal subunit protein bL31 (75 aa).

Belongs to the bacterial ribosomal protein bL31 family. Type A subfamily. As to quaternary structure, part of the 50S ribosomal subunit.

Functionally, binds the 23S rRNA. The protein is Large ribosomal subunit protein bL31 of Zymomonas mobilis subsp. mobilis (strain ATCC 31821 / ZM4 / CP4).